Consider the following 1026-residue polypeptide: Multidrug resistance protein MdtC (1026 aa).

11 helical membrane passes run 15–35 (ILIAAAITLCGILGFRLLPVA), 333–353 (EVEETLAISVALVILVVFLFL), 360–380 (LIPAVAVPVSLIGTFAAMYLC), 387–407 (LSLMALTIATGFVVDDAIVVL), 431–451 (VGFTVISMSLSLVAVFLPLLL), 463–483 (FAVTLSVAIGISLVVSLTLTP), 528–548 (LVGVVFLGTVALNIWLYIAIP), 853–873 (LILIVAAIATVYIVLGILYES), 897–917 (LFNAPFSLIALIGIMLLIGIV), 953–973 (PIMMTTLAALFGALPLVLSDG), and 984–1004 (ITIVGGLVMSQLLTLYTTPVV).

Belongs to the resistance-nodulation-cell division (RND) (TC 2.A.6) family. MdtC subfamily. As to quaternary structure, part of a tripartite efflux system composed of MdtA, MdtB and MdtC. MdtC forms a heteromultimer with MdtB.

It is found in the cell inner membrane. The protein is Multidrug resistance protein MdtC of Salmonella paratyphi B (strain ATCC BAA-1250 / SPB7).